Consider the following 261-residue polypeptide: Thiamine thiazole synthase (261 aa).

NAD(+) is bound by residues Ala33, Glu52–Arg53, Gly60, Val124, and His152–Asp154. Positions 154 and 169 each coordinate Fe cation. Ile219 lines the NAD(+) pocket. Arg229 provides a ligand contact to glycine.

It belongs to the THI4 family. Homooctamer; tetramer of dimers. Fe(2+) is required as a cofactor.

It carries out the reaction hydrogen sulfide + glycine + NAD(+) = ADP-5-ethyl-4-methylthiazole-2-carboxylate + nicotinamide + 3 H2O + H(+). It participates in cofactor biosynthesis; thiamine diphosphate biosynthesis. Involved in the biosynthesis of the thiazole moiety of thiamine. Catalyzes the conversion of NAD and glycine to adenosine diphosphate 5-(2-hydroxyethyl)-4-methylthiazole-2-carboxylate (ADT), an adenylated thiazole intermediate, using free sulfide as a source of sulfur. The sequence is that of Thiamine thiazole synthase from Pyrobaculum aerophilum (strain ATCC 51768 / DSM 7523 / JCM 9630 / CIP 104966 / NBRC 100827 / IM2).